We begin with the raw amino-acid sequence, 331 residues long: Protein FLX-like 1 (331 aa).

The disordered stretch occupies residues 1–51 (MSGRNRGPPPPSMKGGSYSGLQAPVHQPPFVRGLGGGPVPPPPHPSMIDDS). A coiled-coil region spans residues 69–252 (ILEDRLAAQN…AEIANSETSA (184 aa)). The span at 306 to 321 (QAAWAGGYDPQQQQQQ) shows a compositional bias: low complexity. Residues 306 to 331 (QAAWAGGYDPQQQQQQQPPPQGQGHR) are disordered. Pro residues predominate over residues 322–331 (QPPPQGQGHR).

It belongs to the FLX family. Interacts with FRI.

In terms of biological role, has no transcriptional activation activity. The polypeptide is Protein FLX-like 1 (FLXL1) (Arabidopsis thaliana (Mouse-ear cress)).